A 206-amino-acid chain; its full sequence is MKPFTILNGIAALLDRPNVDTDQIIPKQFLRKIERTGFGVHLFHDWRYLDDAGTKLNPDFSLNQERYKGASILITRDNFGCGSSREHAPWALEDYGFRAIIAPSYADIFFNNCFKNGMLPVILKSEEVEELFHLVSTNVGAKVIVDLDKQTVTGPTGKIYYFEVDSFRKYCLYNGLDDIGLTLKQESKIGEFEKKQKEVEPWLYAI.

This sequence belongs to the LeuD family. LeuD type 1 subfamily. In terms of assembly, heterodimer of LeuC and LeuD.

It carries out the reaction (2R,3S)-3-isopropylmalate = (2S)-2-isopropylmalate. Its pathway is amino-acid biosynthesis; L-leucine biosynthesis; L-leucine from 3-methyl-2-oxobutanoate: step 2/4. Its function is as follows. Catalyzes the isomerization between 2-isopropylmalate and 3-isopropylmalate, via the formation of 2-isopropylmaleate. This chain is 3-isopropylmalate dehydratase small subunit, found in Leptospira interrogans serogroup Icterohaemorrhagiae serovar copenhageni (strain Fiocruz L1-130).